Here is a 293-residue protein sequence, read N- to C-terminus: ATP synthase subunit gamma, mitochondrial (293 aa).

Residues 1 to 21 (MFALRTAARPAARSVGATRNY) constitute a mitochondrion transit peptide.

As to quaternary structure, F-type ATP synthases have 2 components, the catalytic core F(1) and the membrane-embedded component F(0), linked together by a central stalk and a peripheral stalk. The central stalk, also called rotor shaft, is often seen as part of F(1). The peripheral stalk is seen as part of F(0). F(0) contains the membrane channel next to the rotor. F-type ATP synthases form dimers but each monomer functions independently in ATP generation. The dimer consists of 17 different polypeptides: ATP1 (subunit alpha, 3 molecules per monomer, part of F(1)), ATP2 (subunit beta, 3 copies per monomer, part of F(1)), ATP3 (subunit gamma, part of the central stalk), ATP4 (subunit b, part of the peripheral stalk), ATP5/OSCP (subunit 5/OSCP, part of the peripheral stalk), ATP6 (subunit a, part of the peripheral stalk), ATP7 (subunit d, part of the peripheral stalk), ATP8 (subunit 8, part of the peripheral stalk), OLI1 (subunit c, part of the rotor, 10 molecules per monomer), ATP14 (subunit h, part of the peripheral stalk), ATP15 (subunit epsilon, part of the central stalk), ATP16 (subunit delta, part of the central stalk), ATP17 (subunit f, part of the peripheral stalk), ATP18 (subunit i/j, part of the peripheral stalk), ATP19 (subunit k, dimer-specific, at interface between monomers), ATP20 (subunit g, at interface between monomers), TIM11 (subunit e, at interface between monomers).

The protein resides in the mitochondrion inner membrane. Mitochondrial membrane ATP synthase (F(1)F(0) ATP synthase or Complex V) produces ATP from ADP in the presence of a proton gradient across the membrane which is generated by electron transport complexes of the respiratory chain. F-type ATP synthases consist of two structural domains, F(1) - containing the extramembraneous catalytic core, and F(0) - containing the membrane proton channel, linked together by a central stalk and a peripheral stalk. During catalysis, ATP synthesis in the catalytic domain of F(1) is coupled via a rotary mechanism of the central stalk subunits to proton translocation. Part of the complex F(1) domain and the central stalk which is part of the complex rotary element. The gamma/ATP3 subunit protrudes into the catalytic domain formed of alpha/ATP1(3)beta/ATP2(3). Rotation of the central stalk against the surrounding alpha/ATP1(3)beta/ATP2(3) subunits leads to hydrolysis of ATP in three separate catalytic sites on the beta/ATP2 subunits. The sequence is that of ATP synthase subunit gamma, mitochondrial from Yarrowia lipolytica (strain CLIB 122 / E 150) (Yeast).